The sequence spans 360 residues: Lipid-A-disaccharide synthase (360 aa).

The protein belongs to the LpxB family.

The enzyme catalyses a lipid X + a UDP-2-N,3-O-bis[(3R)-3-hydroxyacyl]-alpha-D-glucosamine = a lipid A disaccharide + UDP + H(+). Its pathway is bacterial outer membrane biogenesis; LPS lipid A biosynthesis. In terms of biological role, condensation of UDP-2,3-diacylglucosamine and 2,3-diacylglucosamine-1-phosphate to form lipid A disaccharide, a precursor of lipid A, a phosphorylated glycolipid that anchors the lipopolysaccharide to the outer membrane of the cell. The protein is Lipid-A-disaccharide synthase of Helicobacter pylori (strain P12).